The sequence spans 693 residues: Golgin subfamily A member 6D (693 aa).

A coiled-coil region spans residues 14 to 611; that stretch reads LEESRQNKLA…KLLELQELVL (598 aa). Disordered regions lie at residues 20–70, 497–547, and 662–693; these read NKLA…GDSQ, LPGE…GTEQ, and VEPAPGVAREGSPHNNPTVQQIVQLSPVMQDT. Residues 537-547 are compositionally biased toward basic and acidic residues; sequence LPKEKADGTEQ. Residues 674-693 show a composition bias toward polar residues; the sequence is PHNNPTVQQIVQLSPVMQDT.

It belongs to the GOLGA6 family.

The polypeptide is Golgin subfamily A member 6D (GOLGA6D) (Homo sapiens (Human)).